A 102-amino-acid polypeptide reads, in one-letter code: Small integral membrane protein 29 (102 aa).

Asparagine 3 carries an N-linked (GlcNAc...) asparagine glycan. Residues 21-41 (VLGPFFLITLVGVVVAVVMYV) form a helical membrane-spanning segment.

It localises to the membrane. The sequence is that of Small integral membrane protein 29 from Mus musculus (Mouse).